We begin with the raw amino-acid sequence, 871 residues long: DNA mismatch repair protein MutS (871 aa).

618-625 (GPNMSGKS) contacts ATP.

Belongs to the DNA mismatch repair MutS family.

In terms of biological role, this protein is involved in the repair of mismatches in DNA. It is possible that it carries out the mismatch recognition step. This protein has a weak ATPase activity. This is DNA mismatch repair protein MutS from Christiangramia forsetii (strain DSM 17595 / CGMCC 1.15422 / KT0803) (Gramella forsetii).